The sequence spans 321 residues: Phospholipid phosphatase-related protein type 5 (321 aa).

6 helical membrane-spanning segments follow: residues 10-30 (SSML…AYYF), 62-82 (AVPP…VIIV), 122-142 (FLGI…AGQV), 196-213 (AALS…ITNT), 225-245 (VLCL…VAEY), and 252-272 (VIAG…CVVN).

It belongs to the PA-phosphatase related phosphoesterase family. Isoform 1 is expressed in brain, lung, kidney and colon. Isoform 2 is expressed in placenta, skeletal muscle and kidney.

The protein localises to the cell membrane. Induces filopodia formation and promotes neurite growth in a CDC42-independent manner; impedes neurite growth inhibitory-mediated axonal retraction. This is Phospholipid phosphatase-related protein type 5 from Homo sapiens (Human).